Reading from the N-terminus, the 385-residue chain is Na(+)/H(+) antiporter NhaA (385 aa).

The next 11 helical transmembrane spans lie at Tyr9–Asp29, Ile45–Phe65, Ile87–Val107, Gly114–Gly134, Ala155–Val175, Thr198–Gln218, Gly220–Asn235, Ala245–Val265, Ile282–Leu302, Phe312–Met332, and Gln345–Met365.

This sequence belongs to the NhaA Na(+)/H(+) (TC 2.A.33) antiporter family.

The protein localises to the cell membrane. The enzyme catalyses Na(+)(in) + 2 H(+)(out) = Na(+)(out) + 2 H(+)(in). Its function is as follows. Na(+)/H(+) antiporter that extrudes sodium in exchange for external protons. In Tropheryma whipplei (strain TW08/27) (Whipple's bacillus), this protein is Na(+)/H(+) antiporter NhaA.